The chain runs to 315 residues: Methionyl-tRNA formyltransferase (315 aa).

112–115 (SLLP) lines the (6S)-5,6,7,8-tetrahydrofolate pocket.

This sequence belongs to the Fmt family.

The enzyme catalyses L-methionyl-tRNA(fMet) + (6R)-10-formyltetrahydrofolate = N-formyl-L-methionyl-tRNA(fMet) + (6S)-5,6,7,8-tetrahydrofolate + H(+). Functionally, attaches a formyl group to the free amino group of methionyl-tRNA(fMet). The formyl group appears to play a dual role in the initiator identity of N-formylmethionyl-tRNA by promoting its recognition by IF2 and preventing the misappropriation of this tRNA by the elongation apparatus. The polypeptide is Methionyl-tRNA formyltransferase (Leptospira borgpetersenii serovar Hardjo-bovis (strain JB197)).